The sequence spans 352 residues: CRISPR-associated endonuclease Cas1 1 (352 aa).

Mn(2+) contacts are provided by E207, H274, and E289.

This sequence belongs to the CRISPR-associated endonuclease Cas1 family. As to quaternary structure, homodimer, forms a heterotetramer with a Cas2 homodimer. Mg(2+) is required as a cofactor. The cofactor is Mn(2+).

Functionally, CRISPR (clustered regularly interspaced short palindromic repeat), is an adaptive immune system that provides protection against mobile genetic elements (viruses, transposable elements and conjugative plasmids). CRISPR clusters contain spacers, sequences complementary to antecedent mobile elements, and target invading nucleic acids. CRISPR clusters are transcribed and processed into CRISPR RNA (crRNA). Acts as a dsDNA endonuclease. Involved in the integration of spacer DNA into the CRISPR cassette. In Saccharolobus solfataricus (strain ATCC 35092 / DSM 1617 / JCM 11322 / P2) (Sulfolobus solfataricus), this protein is CRISPR-associated endonuclease Cas1 1.